The sequence spans 995 residues: Pheromone-regulated membrane protein 10 (995 aa).

Disordered stretches follow at residues 1-217, 253-299, 326-407, and 425-508; these read MSSH…GEKH, GRVL…AVEM, DQSF…YIAP, and NPQD…NPDQ. The segment covering 74–88 has biased composition (low complexity); that stretch reads SNSSTTNNSTESSGS. Residues 110–121 are compositionally biased toward basic and acidic residues; it reads VKGESGDAHEGS. Positions 157–166 are enriched in low complexity; sequence SRGSVGSSSS. The segment covering 170 to 187 has biased composition (basic and acidic residues); sequence KGSDDVNEKETNLDHDYD. A compositionally biased stretch (gly residues) spans 259–269; that stretch reads GSGGGGGGGLI. Positions 283–296 are enriched in acidic residues; sequence EEKEVGGGGEDDGA. Polar residues predominate over residues 326-347; sequence DQSFTYDEPNQSAGSSRNSTAP. Basic and acidic residues-rich tracts occupy residues 359-371 and 385-396; these read DDHK…DQGK and GNDDPEDQHLLL. Positions 495–506 are enriched in acidic residues; it reads EADDEDEDEENP. A run of 10 helical transmembrane segments spans residues 678–698, 700–720, 726–746, 752–772, 794–814, 833–850, 858–878, 881–901, 906–926, and 965–985; these read VFLY…GGWL, IPVT…VSSM, SVFE…IGSI, FCFS…YIIL, IIYS…FGWV, KYRI…GLIN, PVMM…GKHF, VPEF…NVYS, GMAV…GIAS, and VEVS…VYPF.

It belongs to the ThrE exporter (TC 2.A.79) family.

The protein localises to the membrane. In Pichia sorbitophila (strain ATCC MYA-4447 / BCRC 22081 / CBS 7064 / NBRC 10061 / NRRL Y-12695) (Hybrid yeast), this protein is Pheromone-regulated membrane protein 10.